The following is a 197-amino-acid chain: Nucleoside triphosphate pyrophosphatase (197 aa).

The active-site Proton acceptor is Asp70.

Belongs to the Maf family. The cofactor is a divalent metal cation.

The protein localises to the cytoplasm. The catalysed reaction is a ribonucleoside 5'-triphosphate + H2O = a ribonucleoside 5'-phosphate + diphosphate + H(+). It carries out the reaction a 2'-deoxyribonucleoside 5'-triphosphate + H2O = a 2'-deoxyribonucleoside 5'-phosphate + diphosphate + H(+). Functionally, nucleoside triphosphate pyrophosphatase. May have a dual role in cell division arrest and in preventing the incorporation of modified nucleotides into cellular nucleic acids. The sequence is that of Nucleoside triphosphate pyrophosphatase (yhdE) from Shigella flexneri.